The following is an 89-amino-acid chain: MSLTTEQKKEILAQYGLHETDTGSPEAQVAMLTKRIVDLTEHLKTHKHDHHSRRGLLLLVGRRRRLLKYVAKVDVARYRSLIERLGLRR.

This sequence belongs to the universal ribosomal protein uS15 family. As to quaternary structure, part of the 30S ribosomal subunit. Forms a bridge to the 50S subunit in the 70S ribosome, contacting the 23S rRNA.

In terms of biological role, one of the primary rRNA binding proteins, it binds directly to 16S rRNA where it helps nucleate assembly of the platform of the 30S subunit by binding and bridging several RNA helices of the 16S rRNA. Forms an intersubunit bridge (bridge B4) with the 23S rRNA of the 50S subunit in the ribosome. The protein is Small ribosomal subunit protein uS15 of Mycobacteroides abscessus (strain ATCC 19977 / DSM 44196 / CCUG 20993 / CIP 104536 / JCM 13569 / NCTC 13031 / TMC 1543 / L948) (Mycobacterium abscessus).